The sequence spans 754 residues: ToMV susceptible protein tm-1(GCR26) (754 aa).

The tract at residues 1-201 (MATAQSNSPR…AGMVIGRLES (201 aa)) is N-terminal inhibitory domain NN. ATP is bound by residues 18-20 (DTK), Thr55, Arg92, and 124-127 (GSGG). The interval 211–431 (KFTVGVTMFG…VDSFLEMSPK (221 aa)) is N-terminal inhibitory domain NC.

The protein belongs to the UPF0261 family. Homodimer. As to quaternary structure, (Microbial infection) Binds, via an ATP bridge, to the tobamoviruses avirulent (Avr) replication proteins (large and small subunits, e.g. tobacco mild green mosaic virus (TMGMV) AC P18339 and pepper mild mottle virus (PMMoV) AC P89657) to inhibit their function after the translation of tobamoviruses RNA, but before the viral replication complex formation on the membrane surfaces; this interaction is not possible with resistance-breaking strains replication proteins.

Functionally, inhibitor of viral RNA replication which confers resistance to some tobamoviruses including tobacco mild green mosaic virus (TMGMV) and pepper mild mottle virus (PMMoV), but not to tomato mosaic virus (ToMV strains L, ToMV0 and ToMV1-2) and tobacco mosaic virus (TMV). Prevents tobamoviruses RNA replication by affecting the association of tobamoviruses replication proteins (large and small subunits) with host membrane-associated proteins (e.g. TOM1, TOM2A and ARL8), thus inhibiting the replication complex formation on the membranes and avoiding viral negative-strand RNA synthesis. The protein is ToMV susceptible protein tm-1(GCR26) of Solanum lycopersicum (Tomato).